The following is a 167-amino-acid chain: MTDAADLPYRRNVGAMLFNAQGRILIGRRTDQPGAGGPLDGGVWQCPQGGIDADEDPEEAVLRELREEIGTDRAVIMGARPDWLTYDLPAALIGRALGGRYRGQTQKWFALRFTGQDSDIRLDDQQPPEFDAWQWIDLPSLPERNVGFKRDIYRTLVRDFARFSQPA.

The 151-residue stretch at 8–158 folds into the Nudix hydrolase domain; it reads PYRRNVGAML…KRDIYRTLVR (151 aa). A Nudix box motif is present at residues 49-70; that stretch reads GGIDADEDPEEAVLRELREEIG.

This sequence belongs to the Nudix hydrolase family. RppH subfamily. Requires a divalent metal cation as cofactor.

In terms of biological role, accelerates the degradation of transcripts by removing pyrophosphate from the 5'-end of triphosphorylated RNA, leading to a more labile monophosphorylated state that can stimulate subsequent ribonuclease cleavage. The chain is RNA pyrophosphohydrolase from Gluconacetobacter diazotrophicus (strain ATCC 49037 / DSM 5601 / CCUG 37298 / CIP 103539 / LMG 7603 / PAl5).